We begin with the raw amino-acid sequence, 436 residues long: 3-ketoacyl-CoA thiolase (436 aa).

Catalysis depends on Cys-99, which acts as the Acyl-thioester intermediate. Residues His-392 and Cys-422 each act as proton acceptor in the active site.

This sequence belongs to the thiolase-like superfamily. Thiolase family. As to quaternary structure, heterotetramer of two alpha chains (FadJ) and two beta chains (FadI).

Its subcellular location is the cytoplasm. It catalyses the reaction an acyl-CoA + acetyl-CoA = a 3-oxoacyl-CoA + CoA. It participates in lipid metabolism; fatty acid beta-oxidation. In terms of biological role, catalyzes the final step of fatty acid oxidation in which acetyl-CoA is released and the CoA ester of a fatty acid two carbons shorter is formed. The polypeptide is 3-ketoacyl-CoA thiolase (Serratia proteamaculans (strain 568)).